The following is a 420-amino-acid chain: Protein TabA (420 aa).

K57 is modified (N6-(pyridoxal phosphate)lysine).

Belongs to the Orn/Lys/Arg decarboxylase class-II family. It depends on pyridoxal 5'-phosphate as a cofactor.

Functionally, involved in tabtoxin production and pathogenicity. The chain is Protein TabA (tabA) from Pseudomonas amygdali pv. tabaci (Pseudomonas syringae pv. tabaci).